The sequence spans 263 residues: 1-(5-phosphoribosyl)-5-[(5-phosphoribosylamino)methylideneamino] imidazole-4-carboxamide isomerase (263 aa).

It belongs to the HisA/HisF family.

It localises to the cytoplasm. The enzyme catalyses 1-(5-phospho-beta-D-ribosyl)-5-[(5-phospho-beta-D-ribosylamino)methylideneamino]imidazole-4-carboxamide = 5-[(5-phospho-1-deoxy-D-ribulos-1-ylimino)methylamino]-1-(5-phospho-beta-D-ribosyl)imidazole-4-carboxamide. Its pathway is amino-acid biosynthesis; L-histidine biosynthesis; L-histidine from 5-phospho-alpha-D-ribose 1-diphosphate: step 4/9. This chain is 1-(5-phosphoribosyl)-5-[(5-phosphoribosylamino)methylideneamino] imidazole-4-carboxamide isomerase (HIS6), found in Eremothecium gossypii (strain ATCC 10895 / CBS 109.51 / FGSC 9923 / NRRL Y-1056) (Yeast).